Here is a 175-residue protein sequence, read N- to C-terminus: Disulfide bond formation protein B (175 aa).

Topologically, residues 1–13 (MTAFTRFAHSRAS) are cytoplasmic. Residues 14–30 (WLILTGSAIALEAAALY) form a helical membrane-spanning segment. The Periplasmic segment spans residues 31 to 48 (FQYVMKLDPCVMCIYQRL). The cysteines at positions 40 and 43 are disulfide-linked. Residues 49–64 (AVFGILAAGLIGMTAP) traverse the membrane as a helical segment. Residues 65 to 71 (KYRIVRI) lie on the Cytoplasmic side of the membrane. Residues 72-89 (LGALGWAVSATWGLKLAL) traverse the membrane as a helical segment. Residues 90-144 (ALVDMQNNPSPFSTCSFLPEFPAWMPLHEWFPSVMLPTGMCTDVPWQFMGVTMAE) are Periplasmic-facing. Cys104 and Cys130 form a disulfide bridge. The helical transmembrane segment at 145 to 163 (WMVVAFSGYLVALLLFIVP) threads the bilayer. Residues 164-175 (ILSGSNKPSLYK) are Cytoplasmic-facing.

It belongs to the DsbB family.

Its subcellular location is the cell inner membrane. Its function is as follows. Required for disulfide bond formation in some periplasmic proteins. Acts by oxidizing the DsbA protein. This Shewanella sp. (strain MR-4) protein is Disulfide bond formation protein B.